Reading from the N-terminus, the 88-residue chain is Putative septation protein SpoVG (88 aa).

Belongs to the SpoVG family.

In terms of biological role, could be involved in septation. The chain is Putative septation protein SpoVG from Lachnospira eligens (strain ATCC 27750 / DSM 3376 / VPI C15-48 / C15-B4) (Eubacterium eligens).